An 82-amino-acid chain; its full sequence is Sulfur carrier protein TusA (82 aa).

Cys19 (cysteine persulfide intermediate) is an active-site residue.

It belongs to the sulfur carrier protein TusA family.

It is found in the cytoplasm. Its function is as follows. Sulfur carrier protein which probably makes part of a sulfur-relay system. This chain is Sulfur carrier protein TusA, found in Vibrio cholerae serotype O1 (strain ATCC 39541 / Classical Ogawa 395 / O395).